The sequence spans 373 residues: Dynein regulatory complex protein 9 (373 aa).

Residues 145–200 (EQAMKETIEREKNTTAAVRQLRNDLREEKLDHEEKMKEKKKGLSTLKEQLKALKMD) adopt a coiled-coil conformation. The IQ domain maps to 336–365 (RAQAAVIIQAWWRGHKVRMVMSGGGKKGAK).

The protein belongs to the DRC9 family. In terms of assembly, component of the nexin-dynein regulatory complex (N-DRC).

The protein resides in the cytoplasm. Its subcellular location is the cytoskeleton. It is found in the flagellum axoneme. Component of the nexin-dynein regulatory complex (N-DRC), a key regulator of ciliary/flagellar motility which maintains the alignment and integrity of the distal axoneme and regulates microtubule sliding in motile axonemes. This is Dynein regulatory complex protein 9 from Chlamydomonas reinhardtii (Chlamydomonas smithii).